The chain runs to 376 residues: Fibromodulin (376 aa).

The first 18 residues, 1 to 18, serve as a signal peptide directing secretion; the sequence is MQWTSLLLLAGLFSLSQA. Gln-19 is subject to Pyrrolidone carboxylic acid. Sulfotyrosine is present on residues Tyr-20, Tyr-38, Tyr-39, Tyr-45, Tyr-47, Tyr-53, and Tyr-55. Positions 67–105 constitute an LRRNT domain; it reads SPSPPDPRDCPQECDCPPNFPTAMYCDNRNLKYLPFVPS. LRR repeat units follow at residues 106–127, 130–151, 156–176, 177–198, 201–222, 224–245, 246–266, and 269–289; these read RMKYVYFQNNQITSIQEGVFDN, GLLWIALHGNQITSDKVGRKVF, HLERLYLDHNNLTRMPGPLPR, SLRELHLDHNQISRVPNNALEG, NLTALYLQHNEIQEVGSSMRGL, SLILLDLSYNHLRKVPDGLPSA, LEQLYMEHNNVYTVPDSYFRG, and KLLYVRLSHNSLTNNGLASNT. The N-linked (GlcNAc...) (keratan sulfate) asparagine glycan is linked to Asn-127. Asn-166 is a glycosylation site (N-linked (GlcNAc...) (keratan sulfate) asparagine). Asn-201 carries an N-linked (GlcNAc...) (keratan sulfate) asparagine glycan. Residue Asn-291 is glycosylated (N-linked (GlcNAc...) (keratan sulfate) asparagine). 2 LRR repeats span residues 294 to 315 and 316 to 335; these read SLLELDLSYNQLQKIPPVNTNL and ENLYLQGNRINEFSISSFCT. Cys-334 and Cys-367 are disulfide-bonded. An N-linked (GlcNAc...) asparagine glycan is attached at Asn-341. The LRR 11 repeat unit spans residues 344 to 365; that stretch reads KLQVLRLDGNEIKRSAMPADAP.

Belongs to the small leucine-rich proteoglycan (SLRP) family. SLRP class II subfamily. As to quaternary structure, binds to type I and type II collagen. Post-translationally, binds keratan sulfate chains.

The protein resides in the secreted. Its subcellular location is the extracellular space. It is found in the extracellular matrix. Functionally, affects the rate of fibrils formation. May have a primary role in collagen fibrillogenesis. This Homo sapiens (Human) protein is Fibromodulin (FMOD).